Here is a 255-residue protein sequence, read N- to C-terminus: Indole-3-glycerol phosphate synthase (255 aa).

It belongs to the TrpC family.

The enzyme catalyses 1-(2-carboxyphenylamino)-1-deoxy-D-ribulose 5-phosphate + H(+) = (1S,2R)-1-C-(indol-3-yl)glycerol 3-phosphate + CO2 + H2O. It participates in amino-acid biosynthesis; L-tryptophan biosynthesis; L-tryptophan from chorismate: step 4/5. The protein is Indole-3-glycerol phosphate synthase of Streptococcus thermophilus (strain ATCC BAA-491 / LMD-9).